Here is a 221-residue protein sequence, read N- to C-terminus: NIP3 homolog (221 aa).

A disordered region spans residues 24-55; sequence GEKTDESVQPQQQTEQSSAQQTTPSAKAVSNP. Lys26 participates in a covalent cross-link: Glycyl lysine isopeptide (Lys-Gly) (interchain with G-Cter in ubiquitin). Residues 32–49 are compositionally biased toward low complexity; it reads QPQQQTEQSSAQQTTPSA. A helical transmembrane segment spans residues 189–209; sequence VVFGFLVTNIFSFVVGAAVGF. Residues 189 to 209 are required for initiation of apoptosis; sequence VVFGFLVTNIFSFVVGAAVGF.

It belongs to the NIP3 family. Homodimer; via transmembrane domain. Interacts with ced-3 and ced-9. Post-translationally, ubiquitinated and degraded by the proteasome. Under oxidative stress conditions, ubiquitinated at Lys-26 in a pink-1 dependent manner. Colocalizes with pdr-1 and may be ubiquitinated by it. In terms of tissue distribution, expressed in all somatic tissues including neurons, pharynx, intestine, body wall muscles and vulva muscles.

The protein localises to the mitochondrion outer membrane. In terms of biological role, initiates apoptosis in a BH3-independent mechanism possibly by recruiting ced-3 to mitochondria and other cytoplasmic membranes. Has a role in lifespan and tumor growth. Required for the induction of mitophagy under stress conditions. The polypeptide is NIP3 homolog (Caenorhabditis elegans).